We begin with the raw amino-acid sequence, 185 residues long: Ribosome-recycling factor (185 aa).

The protein belongs to the RRF family.

Its subcellular location is the cytoplasm. Functionally, responsible for the release of ribosomes from messenger RNA at the termination of protein biosynthesis. May increase the efficiency of translation by recycling ribosomes from one round of translation to another. In Vibrio parahaemolyticus serotype O3:K6 (strain RIMD 2210633), this protein is Ribosome-recycling factor.